Reading from the N-terminus, the 841-residue chain is Probable alpha-glucuronidase A (841 aa).

The first 20 residues, 1–20, serve as a signal peptide directing secretion; it reads MRGLNLFQLILALLLSMVAA. N-linked (GlcNAc...) asparagine glycans are attached at residues asparagine 51, asparagine 76, asparagine 85, asparagine 149, asparagine 222, asparagine 279, asparagine 310, asparagine 343, asparagine 450, asparagine 465, asparagine 527, asparagine 576, asparagine 682, asparagine 723, and asparagine 732.

This sequence belongs to the glycosyl hydrolase 67 family.

The protein localises to the secreted. It catalyses the reaction an alpha-D-glucuronoside + H2O = D-glucuronate + an alcohol. Alpha-glucuronidase involved in the hydrolysis of xylan, a major structural heterogeneous polysaccharide found in plant biomass representing the second most abundant polysaccharide in the biosphere, after cellulose. Releases 4-O-methylglucuronic acid from xylan. This is Probable alpha-glucuronidase A (aguA) from Aspergillus niger.